The primary structure comprises 48 residues: Small, acid-soluble spore protein P (48 aa).

Residues 1 to 19 (MTNKNTGKDIRQNSPKEHQ) show a composition bias toward basic and acidic residues. Positions 1–48 (MTNKNTGKDIRQNSPKEHQSGQPEPLSGSKKVKNRNHTRQKHNSHHDM) are disordered. A compositionally biased stretch (basic residues) spans 30–48 (KKVKNRNHTRQKHNSHHDM).

This sequence belongs to the SspP family.

It is found in the spore core. This chain is Small, acid-soluble spore protein P, found in Bacillus pumilus (strain SAFR-032).